Here is a 606-residue protein sequence, read N- to C-terminus: MLGSHHQLLIAATAAAAAAAAAEPQLQLQHLLPAAPTTPAVISNPINSIGPINQISSSSHPSNNNQQAVFEKAITISSIAIKRRPTLPQTPASAPQVLSPSPKRQCAAAVSVLPVTVPVPVPVSVPLPVSVPVPVSVKGHPISHTHQIAHTHQISHSHPISHPHHHQLSFAHPTQFAAAVAAHHQQQQQQQAQQQQQAVQQQQQQAVQQQQVAYAVAASPQLQQQQQQQQHRLAQFNQAAAAALLNQHLQQQHQAQQQQHQAQQQSLAHYGGYQLHRYAPQQQQQHILLSSGSSSSKHNSNNNSNTSAGAASAAVPIATSVAAVPTTGGSLPDSPAHESHSHESNSATASAPTTPSPAGSVTSAAPTATATAAAAGSAAATAAATGTPATSAVSDSNNNLNSSSSSNSNSNAIMENQMALAPLGLSQSMDSVNTASNEEEVRTLFVSGLPMDAKPRELYLLFRAYEGYEGSLLKVTSKNGKTASPVGFVTFHTRAGAEAAKQDLQGVRFDPDMPQTIRLEFAKSNTKVSKPKPQPNTATTASHPALMHPLTGHLGGPFFPGGPELWHHPLAYSAAAAAELPGAAALQHATLVHPALHPQVPVRSYL.

The short motif at 81 to 105 is the Nuclear localization signal element; sequence IKRRPTLPQTPASAPQVLSPSPKRQ. Repeat copies occupy residues 91–95, 109–113, 114–118, 122–126, 128–132, 134–138, and 159–163. Residues 91–164 form a 7 X 5 AA approximate repeats of P-V-S-V-P region; the sequence is PASAPQVLSP…SHSHPISHPH (74 aa). Disordered regions lie at residues 147–166, 282–311, 324–365, and 388–410; these read QIAH…PHHH, QQQQ…AGAA, VPTT…TSAA, and PATS…NSNS. Positions 344 to 365 are enriched in low complexity; the sequence is SNSATASAPTTPSPAGSVTSAA. The RRM domain occupies 442–524; the sequence is RTLFVSGLPM…QTIRLEFAKS (83 aa).

Expressed in neural precursors and their daughter cells in the embryonic peripheral nervous system. Less abundant in a number of glial cells in the peripheral and central nervous systems and also present at low levels in the developing gut.

The protein resides in the nucleus. In terms of biological role, may play a role in the development or function of the peripheral nervous system by regulating the processing of nervous system-specific transcripts. This Drosophila melanogaster (Fruit fly) protein is Protein couch potato (cpo).